A 383-amino-acid chain; its full sequence is Arginine biosynthesis bifunctional protein ArgJ (383 aa).

6 residues coordinate substrate: Thr146, Lys168, Thr179, Glu259, Asn378, and Thr383. Thr179 serves as the catalytic Nucleophile.

It belongs to the ArgJ family. In terms of assembly, heterotetramer of two alpha and two beta chains.

Its subcellular location is the cytoplasm. The catalysed reaction is N(2)-acetyl-L-ornithine + L-glutamate = N-acetyl-L-glutamate + L-ornithine. The enzyme catalyses L-glutamate + acetyl-CoA = N-acetyl-L-glutamate + CoA + H(+). It functions in the pathway amino-acid biosynthesis; L-arginine biosynthesis; L-ornithine and N-acetyl-L-glutamate from L-glutamate and N(2)-acetyl-L-ornithine (cyclic): step 1/1. It participates in amino-acid biosynthesis; L-arginine biosynthesis; N(2)-acetyl-L-ornithine from L-glutamate: step 1/4. Its function is as follows. Catalyzes two activities which are involved in the cyclic version of arginine biosynthesis: the synthesis of N-acetylglutamate from glutamate and acetyl-CoA as the acetyl donor, and of ornithine by transacetylation between N(2)-acetylornithine and glutamate. This Thermobifida fusca (strain YX) protein is Arginine biosynthesis bifunctional protein ArgJ.